The chain runs to 578 residues: Ketol-acid reductoisomerase, chloroplastic (578 aa).

Residues 1-52 (MAASTTLALSHPKTLAAAAAAAPKAPTAPAAVSFPVSHAACAPLAARRRAVT) constitute a chloroplast transit peptide. The 199-residue stretch at 90–288 (VRGGRNLFPL…ALGSPFTFAT (199 aa)) folds into the KARI N-terminal Rossmann domain. NADP(+)-binding positions include 111 to 118 (GVIGWGSQ), 144 to 149 (RKGSKS), and 183 to 187 (SDAAQ). Histidine 208 is an active-site residue. 2 consecutive KARI C-terminal knotted domains span residues 289–437 (TLEQ…RPEN) and 438–574 (DLGP…RPEL). The Mg(2+) site is built by aspartate 297, glutamate 301, glutamate 474, and glutamate 478. Serine 500 is a substrate binding site.

The protein belongs to the ketol-acid reductoisomerase family. As to quaternary structure, homodimer. The cofactor is Mg(2+).

Its subcellular location is the plastid. It is found in the chloroplast. The catalysed reaction is (2R)-2,3-dihydroxy-3-methylbutanoate + NADP(+) = (2S)-2-acetolactate + NADPH + H(+). It carries out the reaction (2R,3R)-2,3-dihydroxy-3-methylpentanoate + NADP(+) = (S)-2-ethyl-2-hydroxy-3-oxobutanoate + NADPH + H(+). It functions in the pathway amino-acid biosynthesis; L-isoleucine biosynthesis; L-isoleucine from 2-oxobutanoate: step 2/4. It participates in amino-acid biosynthesis; L-valine biosynthesis; L-valine from pyruvate: step 2/4. The polypeptide is Ketol-acid reductoisomerase, chloroplastic (Oryza sativa subsp. japonica (Rice)).